Consider the following 720-residue polypeptide: Engulfment and cell motility protein 3 (720 aa).

The region spanning Glu-307 to Leu-479 is the ELMO domain. Residues Arg-542–Ser-664 enclose the PH domain. Positions Pro-696 to Pro-706 match the SH3-binding motif.

In terms of assembly, probably interacts directly with the SH3-domain of DOCK1 via its SH3-binding site. Part of a complex with DOCK1 and RAC1. Interacts with ADGRB3.

The protein resides in the cytoplasm. Functionally, involved in cytoskeletal rearrangements required for phagocytosis of apoptotic cells and cell motility. Acts in association with DOCK1 and CRK. Was initially proposed to be required in complex with DOCK1 to activate Rac Rho small GTPases. May enhance the guanine nucleotide exchange factor (GEF) activity of DOCK1. This chain is Engulfment and cell motility protein 3 (Elmo3), found in Mus musculus (Mouse).